Consider the following 151-residue polypeptide: Endoribonuclease YbeY (151 aa).

Positions 117, 121, and 127 each coordinate Zn(2+).

Belongs to the endoribonuclease YbeY family. Zn(2+) serves as cofactor.

The protein resides in the cytoplasm. Its function is as follows. Single strand-specific metallo-endoribonuclease involved in late-stage 70S ribosome quality control and in maturation of the 3' terminus of the 16S rRNA. This chain is Endoribonuclease YbeY, found in Alkaliphilus oremlandii (strain OhILAs) (Clostridium oremlandii (strain OhILAs)).